Reading from the N-terminus, the 1207-residue chain is Putative coatomer subunit alpha (1207 aa).

8 WD repeats span residues 9–50, 51–90, 93–134, 135–174, 210–249, 254–293, 296–336, and 370–411; these read SRSS…DRFD, GHDG…LLFS, GHMD…AILT, GHSH…MKNA, GHDR…AWEV, GHFN…AVQT, RDND…HALN, and SAWL…NSLP. A phosphoserine mark is found at Ser409 and Ser942.

As to quaternary structure, oligomeric complex that consists of at least the alpha, beta, beta', gamma, delta, epsilon and zeta subunits.

The protein localises to the cytoplasm. It is found in the golgi apparatus membrane. Its function is as follows. The coatomer is a cytosolic protein complex that binds to dilysine motifs and reversibly associates with Golgi non-clathrin-coated vesicles, which further mediate biosynthetic protein transport from the ER, via the Golgi up to the trans Golgi network. Coatomer complex is required for budding from Golgi membranes, and is essential for the retrograde Golgi-to-ER transport of dilysine-tagged proteins. The protein is Putative coatomer subunit alpha of Schizosaccharomyces pombe (strain 972 / ATCC 24843) (Fission yeast).